A 298-amino-acid chain; its full sequence is Probable 2-(5''-triphosphoribosyl)-3'-dephosphocoenzyme-A synthase 2 (298 aa).

It belongs to the CitG/MdcB family.

The catalysed reaction is 3'-dephospho-CoA + ATP = 2'-(5''-triphospho-alpha-D-ribosyl)-3'-dephospho-CoA + adenine. The protein is Probable 2-(5''-triphosphoribosyl)-3'-dephosphocoenzyme-A synthase 2 of Salmonella paratyphi A (strain ATCC 9150 / SARB42).